The chain runs to 110 residues: Small ribosomal subunit protein eS25 (110 aa).

Positions 1–38 (MGGKKKPTLSQLAKKAEKEKAQQAQKAKKEVKKEETPA) are disordered. The span at 14–38 (KKAEKEKAQQAQKAKKEVKKEETPA) shows a compositional bias: basic and acidic residues.

This sequence belongs to the eukaryotic ribosomal protein eS25 family.

The protein is Small ribosomal subunit protein eS25 (rps25e) of Pyrobaculum aerophilum (strain ATCC 51768 / DSM 7523 / JCM 9630 / CIP 104966 / NBRC 100827 / IM2).